Reading from the N-terminus, the 1265-residue chain is Methionine synthase (1265 aa).

A Hcy-binding domain is found at 19-338 (RDEINAILQK…DHIREIAEAV (320 aa)). Zn(2+) contacts are provided by Cys-260, Cys-323, and Cys-324. In terms of domain architecture, Pterin-binding spans 371–632 (FVNIGERCNV…IHKELLQLCE (262 aa)). Residues 382–384 (GSR), Asp-449, Asn-470, Asp-537, Asn-579, Arg-585, and Arg-591 each bind (6S)-5,6,7,8-tetrahydrofolate. The region spanning 662–759 (QTDEWRNGPV…FMEKEREETR (98 aa)) is the B12-binding N-terminal domain. Methylcob(III)alamin is bound by residues Glu-709, 782–786 (GDVHD), His-785, Ser-830, Thr-834, and Ala-886. Residues 772-907 (QGTIVLATVK…DENLKDEYFE (136 aa)) enclose the B12-binding domain. One can recognise an AdoMet activation domain in the interval 923–1265 (SLKERRYLPL…LGPILGYDTD (343 aa)). S-adenosyl-L-methionine is bound by residues Asp-974, Arg-1172, and 1227-1228 (YF). A Phosphothreonine modification is found at Thr-1264.

Belongs to the vitamin-B12 dependent methionine synthase family. In terms of assembly, monomer. Dimer. Forms a multiprotein complex with MMACHC, MMADHC and MTRR. The cofactor is methylcob(III)alamin. It depends on Zn(2+) as a cofactor. In terms of tissue distribution, widely expressed. Expressed at the highest levels in pancreas, heart, brain, skeletal muscle and placenta. Expressed at lower levels in lung, liver and kidney.

Its subcellular location is the cytoplasm. It carries out the reaction (6S)-5-methyl-5,6,7,8-tetrahydrofolate + L-homocysteine = (6S)-5,6,7,8-tetrahydrofolate + L-methionine. Its pathway is amino-acid biosynthesis; L-methionine biosynthesis via de novo pathway; L-methionine from L-homocysteine (MetH route): step 1/1. Functionally, catalyzes the transfer of a methyl group from methylcob(III)alamin (MeCbl) to homocysteine, yielding enzyme-bound cob(I)alamin and methionine in the cytosol. MeCbl is an active form of cobalamin (vitamin B12) used as a cofactor for methionine biosynthesis. Cob(I)alamin form is regenerated to MeCbl by a transfer of a methyl group from 5-methyltetrahydrofolate. The processing of cobalamin in the cytosol occurs in a multiprotein complex composed of at least MMACHC, MMADHC, MTRR (methionine synthase reductase) and MTR which may contribute to shuttle safely and efficiently cobalamin towards MTR in order to produce methionine. The sequence is that of Methionine synthase from Homo sapiens (Human).